The primary structure comprises 132 residues: UPF0299 membrane protein YohJ (132 aa).

4 helical membrane passes run 7–27, 31–51, 63–83, and 93–113; these read IIWQ…AGIF, LLPI…VLLA, GCYV…VGVM, and FGPV…VVSW.

It belongs to the UPF0299 family.

The protein resides in the cell inner membrane. The protein is UPF0299 membrane protein YohJ of Salmonella agona (strain SL483).